We begin with the raw amino-acid sequence, 34 residues long: Photosystem II reaction center protein M (34 aa).

Residues 5–25 form a helical membrane-spanning segment; the sequence is ILAFIATALFILVPTAFLLII.

This sequence belongs to the PsbM family. PSII is composed of 1 copy each of membrane proteins PsbA, PsbB, PsbC, PsbD, PsbE, PsbF, PsbH, PsbI, PsbJ, PsbK, PsbL, PsbM, PsbT, PsbX, PsbY, PsbZ, Psb30/Ycf12, at least 3 peripheral proteins of the oxygen-evolving complex and a large number of cofactors. It forms dimeric complexes.

Its subcellular location is the plastid. The protein localises to the chloroplast thylakoid membrane. In terms of biological role, one of the components of the core complex of photosystem II (PSII). PSII is a light-driven water:plastoquinone oxidoreductase that uses light energy to abstract electrons from H(2)O, generating O(2) and a proton gradient subsequently used for ATP formation. It consists of a core antenna complex that captures photons, and an electron transfer chain that converts photonic excitation into a charge separation. This subunit is found at the monomer-monomer interface. This Cenchrus americanus (Pearl millet) protein is Photosystem II reaction center protein M.